A 186-amino-acid chain; its full sequence is Photosystem I assembly protein Ycf4 (186 aa).

Helical transmembrane passes span 22–42 (FCWACILFLGSLGFLVVGTSS) and 57–77 (IIFFPQGIVMSFYGIAGLFIS).

The protein belongs to the Ycf4 family.

It localises to the plastid. The protein resides in the chloroplast thylakoid membrane. Its function is as follows. Seems to be required for the assembly of the photosystem I complex. This Dioscorea elephantipes (Elephant's foot yam) protein is Photosystem I assembly protein Ycf4.